The chain runs to 955 residues: Vacuolar membrane protease (955 aa).

The Cytoplasmic segment spans residues 1–16; it reads MASLRLPRANPLAFTR. Residues 17–37 traverse the membrane as a helical segment; it reads WPVTVITAIVYLALLIPLLVV. The Vacuolar segment spans residues 38-390; the sequence is HHVVPSAPSS…STFVLFQLHT (353 aa). N-linked (GlcNAc...) asparagine glycans are attached at residues N53 and N119. 2 residues coordinate Zn(2+): H174 and D186. The active-site Proton acceptor is the E220. Positions 221, 246, and 319 each coordinate Zn(2+). The chain crosses the membrane as a helical span at residues 391–411; that stretch reads LFALLVTLLIVGPLTLLFTSI. Topologically, residues 412-442 are cytoplasmic; the sequence is ALTKADKMYLFRSSAKSEDRLDVVPLQGLRG. The helical transmembrane segment at 443-463 threads the bilayer; the sequence is FFRFPFLFGIPTVVTVGLAYL. The Vacuolar segment spans residues 464–473; that stretch reads VTKVNPYIIH. The helical transmembrane segment at 474–494 threads the bilayer; that stretch reads SSAYAVWSMMVAAWVFLAWFV. The Cytoplasmic portion of the chain corresponds to 495–508; the sequence is SRVADFARPSAFHR. A helical membrane pass occupies residues 509–529; that stretch reads IYTLTWMYVLSWVSAVIATVY. The Vacuolar portion of the chain corresponds to 530-533; that stretch reads ANQR. The helical transmembrane segment at 534 to 554 threads the bilayer; that stretch reads GLAGGYFIFFFHAGIFLAKWI. Topologically, residues 555–656 are cytoplasmic; that stretch reads SYLELFALPS…WSYALPKWTW (102 aa). The segment covering 574–590 has biased composition (low complexity); sequence SASGRASGHGSRRGTTS. Positions 574-611 are disordered; that stretch reads SASGRASGHGSRRGTTSGEDDGEEAEEEPTESTSLLGS. The span at 591 to 603 shows a compositional bias: acidic residues; the sequence is GEDDGEEAEEEPT. The chain crosses the membrane as a helical span at residues 657 to 677; that stretch reads VLQLLLTAPITLIMVGPLALL. Topologically, residues 678–693 are vacuolar; that stretch reads TISAISQTGQDGGHPL. The chain crosses the membrane as a helical span at residues 694–714; sequence FAYVAIAIFTTIMLTPLLPFI. The Cytoplasmic segment spans residues 715–721; the sequence is HRYTYHV. Residues 722-742 traverse the membrane as a helical segment; it reads PLFLLAVFLGTLIYNLVAFPF. Over 743–955 the chain is Vacuolar; the sequence is SDSNRLKLYY…RRAFEIGNDD (213 aa). N-linked (GlcNAc...) asparagine glycosylation is present at N826.

Belongs to the peptidase M28 family. Requires Zn(2+) as cofactor.

It localises to the vacuole membrane. In terms of biological role, may be involved in vacuolar sorting and osmoregulation. This chain is Vacuolar membrane protease, found in Aspergillus oryzae (strain ATCC 42149 / RIB 40) (Yellow koji mold).